A 157-amino-acid polypeptide reads, in one-letter code: 2-C-methyl-D-erythritol 2,4-cyclodiphosphate synthase (157 aa).

A divalent metal cation contacts are provided by aspartate 8 and histidine 10. Residues 8 to 10 (DVH) and 34 to 35 (HS) each bind 4-CDP-2-C-methyl-D-erythritol 2-phosphate. Residue histidine 42 participates in a divalent metal cation binding. Residues 56-58 (DIG), 61-65 (FPDTD), 132-135 (TTTE), phenylalanine 139, and arginine 142 each bind 4-CDP-2-C-methyl-D-erythritol 2-phosphate.

Belongs to the IspF family. In terms of assembly, homotrimer. A divalent metal cation is required as a cofactor.

It catalyses the reaction 4-CDP-2-C-methyl-D-erythritol 2-phosphate = 2-C-methyl-D-erythritol 2,4-cyclic diphosphate + CMP. It participates in isoprenoid biosynthesis; isopentenyl diphosphate biosynthesis via DXP pathway; isopentenyl diphosphate from 1-deoxy-D-xylulose 5-phosphate: step 4/6. Functionally, involved in the biosynthesis of isopentenyl diphosphate (IPP) and dimethylallyl diphosphate (DMAPP), two major building blocks of isoprenoid compounds. Catalyzes the conversion of 4-diphosphocytidyl-2-C-methyl-D-erythritol 2-phosphate (CDP-ME2P) to 2-C-methyl-D-erythritol 2,4-cyclodiphosphate (ME-CPP) with a corresponding release of cytidine 5-monophosphate (CMP). The polypeptide is 2-C-methyl-D-erythritol 2,4-cyclodiphosphate synthase (Geotalea uraniireducens (strain Rf4) (Geobacter uraniireducens)).